The following is a 267-amino-acid chain: L-erythrulose-1-phosphate isomerase (267 aa).

The active-site Electrophile is the His95. The active-site Proton acceptor is the Glu168. Substrate contacts are provided by Gly174 and Ser211.

The protein belongs to the triosephosphate isomerase family. Homodimer.

It is found in the cytoplasm. The catalysed reaction is L-erythrulose 1-phosphate = D-erythrulose 4-phosphate. Its pathway is carbohydrate metabolism; erythritol degradation. Functionally, catalyzes the isomerization of D-erythrulose-4P to L-erythrulose-1P. The sequence is that of L-erythrulose-1-phosphate isomerase from Rhizobium etli (strain ATCC 51251 / DSM 11541 / JCM 21823 / NBRC 15573 / CFN 42).